We begin with the raw amino-acid sequence, 481 residues long: MEWAEKYRPEHLADIVGNTSAVRQMADWAKTWTARSKPLLLYGKPGIGKTSSVYALARDMNWDVIELNASDQRTAAVIERIAGAGSTTASLTGSARKLIIMDEADNLQGTADRGGAKAILECIKNARQPIVLIANDLYGLAAELRLRCEPVQFRALPARSIAPRLKYICSSEKIACSESAVHEIAESAEGDMRSAVNMLYASAIGRQSLDGKNVHTSQKDERVSIFSLVTAVFGKTSDEELIRLSRDVDEFPEDIEQWVEGSVHTITDPAGLGLAYRSLSRADEYIGYTYRRQYHTLWRYATAVMLLGVADASAGKGIHSRILPPERWQKMSVAKKQKAIRAAVLSRLAATMQLPQATLREKYMDIITLLVDLDPETFARELALDADGLNFFLNDKSRAQEILKSLAKVEREKEPEPKKKGRKKAESPAKDADPAPAVDPVPKEELPVKSAPEERPADPPAPEEPGRKTVAHNQSTLFDGF.

Residue 43-50 participates in ATP binding; the sequence is GKPGIGKT. 2 stretches are compositionally biased toward basic and acidic residues: residues 408–433 and 441–457; these read KVER…KDAD and VPKE…ERPA. A disordered region spans residues 408 to 481; sequence KVEREKEPEP…HNQSTLFDGF (74 aa). Residues 471–481 are compositionally biased toward polar residues; it reads AHNQSTLFDGF.

It belongs to the activator 1 small subunits family. RfcL subfamily. Heteromultimer composed of small subunits (RfcS) and large subunits (RfcL).

Functionally, part of the RFC clamp loader complex which loads the PCNA sliding clamp onto DNA. The polypeptide is Replication factor C large subunit (Methanoregula boonei (strain DSM 21154 / JCM 14090 / 6A8)).